We begin with the raw amino-acid sequence, 125 residues long: uncharacterized protein (125 aa).

2 helical membrane passes run 28 to 48 (VFIT…SQFC) and 54 to 74 (FFLP…LFFF).

The protein localises to the membrane. This is an uncharacterized protein from Saccharomyces cerevisiae (strain ATCC 204508 / S288c) (Baker's yeast).